Consider the following 134-residue polypeptide: Probable salivary secreted peptide (134 aa).

The N-terminal stretch at 1–24 (MGAQKTIAYLAIIAIAVIFAQVNT) is a signal peptide.

The protein resides in the secreted. This Bombus ignitus (Bumblebee) protein is Probable salivary secreted peptide.